The chain runs to 156 residues: Arginine repressor (156 aa).

This sequence belongs to the ArgR family.

Its subcellular location is the cytoplasm. It participates in amino-acid biosynthesis; L-arginine biosynthesis [regulation]. Regulates arginine biosynthesis genes. This Vibrio vulnificus (strain CMCP6) protein is Arginine repressor.